The sequence spans 130 residues: Small ribosomal subunit protein uS8 (130 aa).

It belongs to the universal ribosomal protein uS8 family. Part of the 30S ribosomal subunit.

One of the primary rRNA binding proteins, it binds directly to 16S rRNA central domain where it helps coordinate assembly of the platform of the 30S subunit. In Methanococcus vannielii (strain ATCC 35089 / DSM 1224 / JCM 13029 / OCM 148 / SB), this protein is Small ribosomal subunit protein uS8.